Reading from the N-terminus, the 193-residue chain is dCTP deaminase (193 aa).

DCTP contacts are provided by residues 110–115, Asp-128, 136–138, Tyr-171, Lys-178, and Gln-182; these read RSSLAR and VLE. Glu-138 functions as the Proton donor/acceptor in the catalytic mechanism. Positions 169 to 193 are disordered; that stretch reads RPYNRREDAKYRNQQGAVASRIDKD.

Belongs to the dCTP deaminase family. Homotrimer.

The catalysed reaction is dCTP + H2O + H(+) = dUTP + NH4(+). It participates in pyrimidine metabolism; dUMP biosynthesis; dUMP from dCTP (dUTP route): step 1/2. Functionally, catalyzes the deamination of dCTP to dUTP. This chain is dCTP deaminase, found in Escherichia coli O1:K1 / APEC.